The sequence spans 408 residues: CinA-like protein (408 aa).

This sequence belongs to the CinA family.

This chain is CinA-like protein, found in Anaeromyxobacter dehalogenans (strain 2CP-1 / ATCC BAA-258).